A 380-amino-acid polypeptide reads, in one-letter code: Chaperone protein DnaJ (380 aa).

Residues 5 to 70 (DYYEVLGVER…SKRAAYDQYG (66 aa)) enclose the J domain. The CR-type zinc finger occupies 139-217 (GTTVNIRVPT…CHGEGRVEES (79 aa)). Positions 152, 155, 169, 172, 191, 194, 205, and 208 each coordinate Zn(2+). 4 CXXCXGXG motif repeats span residues 152 to 159 (CKPCDGSG), 169 to 176 (CPTCGGIG), 191 to 198 (CPRCHGHG), and 205 to 212 (CDSCHGEG).

It belongs to the DnaJ family. In terms of assembly, homodimer. It depends on Zn(2+) as a cofactor.

The protein resides in the cytoplasm. Functionally, participates actively in the response to hyperosmotic and heat shock by preventing the aggregation of stress-denatured proteins and by disaggregating proteins, also in an autonomous, DnaK-independent fashion. Unfolded proteins bind initially to DnaJ; upon interaction with the DnaJ-bound protein, DnaK hydrolyzes its bound ATP, resulting in the formation of a stable complex. GrpE releases ADP from DnaK; ATP binding to DnaK triggers the release of the substrate protein, thus completing the reaction cycle. Several rounds of ATP-dependent interactions between DnaJ, DnaK and GrpE are required for fully efficient folding. Also involved, together with DnaK and GrpE, in the DNA replication of plasmids through activation of initiation proteins. This Pseudomonas syringae pv. tomato (strain ATCC BAA-871 / DC3000) protein is Chaperone protein DnaJ.